Consider the following 386-residue polypeptide: Patatin-16 (386 aa).

An N-terminal signal peptide occupies residues 1-23; it reads MATTKSFLILIVMILATTSSTFA. The 198-residue stretch at 32–229 folds into the PNPLA domain; sequence LSIDGGGIKG…TVADPALLSV (198 aa). The short motif at 36-41 is the GXGXXG element; the sequence is GGGIKG. The GXSXG signature appears at 75-79; the sequence is GTSTG. S77 serves as the catalytic Nucleophile. N-linked (GlcNAc...) asparagine glycosylation occurs at N115. Catalysis depends on D215, which acts as the Proton acceptor. Positions 215–217 match the DGA/G motif; that stretch reads DGA. Residues 360–384 are a coiled coil; the sequence is ETYEEALKRFAKLLSDRKKLRANKA.

It belongs to the patatin family.

It is found in the vacuole. Probable lipolytic acyl hydrolase (LAH), an activity which is thought to be involved in the response of tubers to pathogens. The protein is Patatin-16 of Solanum tuberosum (Potato).